A 313-amino-acid chain; its full sequence is Olfactory receptor 2B6 (313 aa).

Over 1 to 27 (MSWANESITGEFVLLGFSDQPWLEFPL) the chain is Extracellular. A glycan (N-linked (GlcNAc...) asparagine) is linked at asparagine 5. Residues 28 to 48 (FVVFLTSYIVTIFGNLNIILV) traverse the membrane as a helical segment. Residues 49 to 57 (SHLDPKLHT) are Cytoplasmic-facing. A helical membrane pass occupies residues 58–78 (PMYFFLTNLSVIDLCYITCTV). Over 79–97 (PQMLVNLRSIRKVISFGGC) the chain is Extracellular. Cysteine 97 and cysteine 189 form a disulfide bridge. A helical transmembrane segment spans residues 98–118 (VVQLFMFLALGATECVLLPVM). Residues 119–143 (SFDRFVAICRPLHYSVIMHQRLCLQ) lie on the Cytoplasmic side of the membrane. The helical transmembrane segment at 144–164 (LAAVSWIIGFGNSVWLSILTL) threads the bilayer. At 165 to 200 (QLPRCGHYVIDHFLCEVPALLKLSCVDVTANEAELF) the chain is on the extracellular side. Residues 201 to 221 (FVSVFFHLTPLSLILTSYAFI) traverse the membrane as a helical segment. At 222–244 (ARAILKIQSAEGRQKAFGTCSSH) the chain is on the cytoplasmic side. The helical transmembrane segment at 245 to 265 (LIVVSLFYGTALSVYFLPPSP) threads the bilayer. Over 266–271 (HSKNRR) the chain is Extracellular. Residues 272–292 (KMVPLFYGIIAPMLNPLIYTL) traverse the membrane as a helical segment. Residues 293–313 (RNKEVKDAFKRLIKRVFLSKN) lie on the Cytoplasmic side of the membrane.

Belongs to the G-protein coupled receptor 1 family.

The protein resides in the cell membrane. Odorant receptor. This is Olfactory receptor 2B6 from Mus musculus (Mouse).